We begin with the raw amino-acid sequence, 289 residues long: Delta-sarcoglycan (289 aa).

The Cytoplasmic portion of the chain corresponds to 1-35; it reads MPQEQYTHHRSTMPGSVGPQVYKVGIYGWRKRCLY. Residues 36-56 form a helical; Signal-anchor for type II membrane protein membrane-spanning segment; sequence FFVLLLMILILVNLAMTIWIL. The Extracellular portion of the chain corresponds to 57–289; it reads KVMNFTIDGM…TCQINTSVCL (233 aa). 2 N-linked (GlcNAc...) asparagine glycosylation sites follow: asparagine 60 and asparagine 108. Intrachain disulfides connect cysteine 263/cysteine 288 and cysteine 265/cysteine 281. N-linked (GlcNAc...) asparagine glycosylation is present at asparagine 284.

It belongs to the sarcoglycan beta/delta/gamma/zeta family. In terms of assembly, interacts with FLNC and DAG1. Cross-link to form 2 major subcomplexes: one consisting of SGCB, SGCD and SGCG and the other consisting of SGCB and SGCD. The association between SGCB and SGCG is particularly strong while SGCA is loosely associated with the other sarcoglycans. Glycosylated. Post-translationally, disulfide bonds are present. In terms of tissue distribution, most strongly expressed in skeletal and cardiac muscle. Also detected in smooth muscle. Weak expression in brain and lung.

It localises to the cell membrane. The protein resides in the sarcolemma. The protein localises to the cytoplasm. Its subcellular location is the cytoskeleton. Component of the sarcoglycan complex, a subcomplex of the dystrophin-glycoprotein complex which forms a link between the F-actin cytoskeleton and the extracellular matrix. This is Delta-sarcoglycan (SGCD) from Homo sapiens (Human).